The primary structure comprises 447 residues: Asparagine--tRNA ligase (447 aa).

This sequence belongs to the class-II aminoacyl-tRNA synthetase family. In terms of assembly, homodimer.

The protein resides in the cytoplasm. The enzyme catalyses tRNA(Asn) + L-asparagine + ATP = L-asparaginyl-tRNA(Asn) + AMP + diphosphate + H(+). The polypeptide is Asparagine--tRNA ligase (Lactococcus lactis subsp. cremoris (strain SK11)).